The sequence spans 407 residues: Tyrosine--tRNA ligase (407 aa).

The short motif at 47–56 is the 'HIGH' region element; it reads PTAPDLHLGA. Residues 231-235 carry the 'KMSKS' region motif; it reads KMSKS. Lys234 is a binding site for ATP. An S4 RNA-binding domain is found at 342-403; the sequence is PRLSQLLVQV…GKRHFARVAL (62 aa).

This sequence belongs to the class-I aminoacyl-tRNA synthetase family. TyrS type 2 subfamily. In terms of assembly, homodimer.

It localises to the cytoplasm. It catalyses the reaction tRNA(Tyr) + L-tyrosine + ATP = L-tyrosyl-tRNA(Tyr) + AMP + diphosphate + H(+). Catalyzes the attachment of tyrosine to tRNA(Tyr) in a two-step reaction: tyrosine is first activated by ATP to form Tyr-AMP and then transferred to the acceptor end of tRNA(Tyr). The protein is Tyrosine--tRNA ligase of Acidithiobacillus ferrooxidans (Thiobacillus ferrooxidans).